Consider the following 247-residue polypeptide: D-alanyl-D-alanine dipeptidase (247 aa).

His140 and Asp147 together coordinate Zn(2+). Catalysis depends on Glu215, which acts as the Proton donor/acceptor. Zn(2+) is bound at residue His218.

It belongs to the peptidase M15D family. Zn(2+) serves as cofactor.

The protein localises to the cytoplasm. It catalyses the reaction D-alanyl-D-alanine + H2O = 2 D-alanine. In terms of biological role, catalyzes hydrolysis of the D-alanyl-D-alanine dipeptide. May have a role in cell-wall turnover. This chain is D-alanyl-D-alanine dipeptidase, found in Synechocystis sp. (strain ATCC 27184 / PCC 6803 / Kazusa).